The primary structure comprises 209 residues: Uracil phosphoribosyltransferase (209 aa).

Residues Arg-79, Arg-104, and 131-139 contribute to the 5-phospho-alpha-D-ribose 1-diphosphate site; that span reads DPMLATGGS. Uracil is bound by residues Ile-194 and 199 to 201; that span reads GDA. Asp-200 contacts 5-phospho-alpha-D-ribose 1-diphosphate.

Belongs to the UPRTase family. Mg(2+) serves as cofactor.

It carries out the reaction UMP + diphosphate = 5-phospho-alpha-D-ribose 1-diphosphate + uracil. It functions in the pathway pyrimidine metabolism; UMP biosynthesis via salvage pathway; UMP from uracil: step 1/1. Allosterically activated by GTP. Functionally, catalyzes the conversion of uracil and 5-phospho-alpha-D-ribose 1-diphosphate (PRPP) to UMP and diphosphate. The chain is Uracil phosphoribosyltransferase from Ligilactobacillus salivarius (strain UCC118) (Lactobacillus salivarius).